Consider the following 210-residue polypeptide: Protein-L-isoaspartate O-methyltransferase (210 aa).

Ser-54 is an active-site residue.

The protein belongs to the methyltransferase superfamily. L-isoaspartyl/D-aspartyl protein methyltransferase family.

The protein localises to the cytoplasm. It catalyses the reaction [protein]-L-isoaspartate + S-adenosyl-L-methionine = [protein]-L-isoaspartate alpha-methyl ester + S-adenosyl-L-homocysteine. In terms of biological role, catalyzes the methyl esterification of L-isoaspartyl residues in peptides and proteins that result from spontaneous decomposition of normal L-aspartyl and L-asparaginyl residues. It plays a role in the repair and/or degradation of damaged proteins. This Methanothrix thermoacetophila (strain DSM 6194 / JCM 14653 / NBRC 101360 / PT) (Methanosaeta thermophila) protein is Protein-L-isoaspartate O-methyltransferase.